A 260-amino-acid chain; its full sequence is Ribosome maturation factor RimP (260 aa).

The interval 198–260 (QSLGILPPPP…RGDIDPIEGE (63 aa)) is disordered. Basic and acidic residues-rich tracts occupy residues 210-228 (AKTDPAKRGTPKPKLENGK) and 238-254 (NTKEHRLAAERLRRGDI).

This sequence belongs to the RimP family.

Its subcellular location is the cytoplasm. In terms of biological role, required for maturation of 30S ribosomal subunits. The protein is Ribosome maturation factor RimP of Nitrobacter winogradskyi (strain ATCC 25391 / DSM 10237 / CIP 104748 / NCIMB 11846 / Nb-255).